The primary structure comprises 147 residues: MIQKLKDFKLTPENTYYATGKRKEAVARVWLLRDRPNTFIVGSDKTNKEYDLREYVQRETLYNKIMYPFKVTGHEGKFGIYATVRGGGISAQAEAIMYGVAKALLQHNPDLRPTLKKAGLLTRDAREKERKKYGQMGARAKYRWSKR.

A disordered region spans residues Lys128–Arg147.

This sequence belongs to the universal ribosomal protein uS9 family.

The chain is Small ribosomal subunit protein uS9 (rpsI) from Aquifex aeolicus (strain VF5).